We begin with the raw amino-acid sequence, 625 residues long: MNFQENYDVIVIGGGHAGVEASLAAARMGSKTLLMTINLNMVAFMPCNPSIGGSAKGIVVREIDALGGEMGRNIDKTYIQMKMLNTGKGPAVRALRAQADKDEYAASMKNTVSDQENLTLRQGMVEELILDDEKQKVIGVRTSTGTQYGAKAVIITTGTALRGEIIIGELKYSSGPNNSLSSIGLADNLREIGFEIGRFKTGTPPRVLASSIDYDKTEIQPGDEAPNHFSFMSSDEDYLKDQIPCWLTYTTENSHTILRDNLHRAPLFSGIVKGVGPRYCPSIEDKITRFADKPRHQLFLEPEGRNTEEVYIGGLSTSMPEDVQFDLVKSIPGLENAKMMRPGYAIEYDVVMPHQLRPTLETKLISGLFTAGQTNGTSGYEEAAGQGLVAGINAALKIQGKPEFILKRSEAYIGVMIDDLVTKGTLEPYRLLTSRAEYRLILRHDNADRRLTEIGRQVGLVSDAQWEHYQAKMAQFDREMKRLNSEKLKPLPDTQEKLGKLGFGPIKDALTGAEFLKRPEVNYDEVIDFIGQAPEVIDRTVIELIETEITYEGYIKKAMDQVDKMHRLEAKRIPKNMDWDKLDSIATEARQKFKKINPETLGQASRISGVNPADISILMVYLEGK.

FAD is bound by residues 13-18 (GGGHAG), V125, and S182. Position 276–290 (276–290 (GPRYCPSIEDKITRF)) interacts with NAD(+). An FAD-binding site is contributed by Q373.

Belongs to the MnmG family. Homodimer. Heterotetramer of two MnmE and two MnmG subunits. Requires FAD as cofactor.

Its subcellular location is the cytoplasm. In terms of biological role, NAD-binding protein involved in the addition of a carboxymethylaminomethyl (cmnm) group at the wobble position (U34) of certain tRNAs, forming tRNA-cmnm(5)s(2)U34. The chain is tRNA uridine 5-carboxymethylaminomethyl modification enzyme MnmG from Lactococcus lactis subsp. cremoris (strain MG1363).